Consider the following 325-residue polypeptide: ATP synthase gamma chain (325 aa).

This sequence belongs to the ATPase gamma chain family. In terms of assembly, F-type ATPases have 2 components, CF(1) - the catalytic core - and CF(0) - the membrane proton channel. CF(1) has five subunits: alpha(3), beta(3), gamma(1), delta(1), epsilon(1). CF(0) has three main subunits: a, b and c.

The protein localises to the cell membrane. Its function is as follows. Produces ATP from ADP in the presence of a proton gradient across the membrane. The gamma chain is believed to be important in regulating ATPase activity and the flow of protons through the CF(0) complex. This chain is ATP synthase gamma chain, found in Corynebacterium urealyticum (strain ATCC 43042 / DSM 7109).